The chain runs to 266 residues: Putative peptidyl-prolyl cis-trans isomerase NifM (266 aa).

The PpiC domain occupies 124–221; it reads PEQRLTRHLL…LGWHLLWCEA (98 aa).

It belongs to the PpiC/parvulin rotamase family.

The enzyme catalyses [protein]-peptidylproline (omega=180) = [protein]-peptidylproline (omega=0). Functionally, required for the activation and stabilization of the iron-component (NifH) of nitrogenase. Probable PPIase. The protein is Putative peptidyl-prolyl cis-trans isomerase NifM (nifM) of Klebsiella oxytoca.